We begin with the raw amino-acid sequence, 609 residues long: Cell division protein DipM (609 aa).

A signal peptide spans 1–24 (MRQLWTQAAVIALTAGTLGAPAHA). Residues 21 to 103 (PAHASGQSGQ…PVLRATPPRT (83 aa)) form a disordered region. Positions 25-38 (SGQSGQRFTPNFPI) are enriched in polar residues. Pro residues predominate over residues 79 to 93 (LPPPAPVSTPAPAPQ). LysM domains follow at residues 121–165 (QVRV…KIKG) and 171–215 (KAYV…KLLL). Composition is skewed to low complexity over residues 242–258 (AEPA…AATP) and 265–280 (PVSE…STTT). The interval 242-280 (AEPAPATTRPATPAATPSRPVRQPVSEETSEPATTSTTT) is disordered. 2 consecutive LysM domains span residues 295–339 (QVHT…KIKG) and 345–389 (KAYS…KIAL). The segment at 389–457 (LPDGFRDKGP…AAQPITPPPS (69 aa)) is disordered. The span at 400–429 (RTTTTTRPATPPANTYARVDSSAAAASTPS) shows a compositional bias: low complexity. The interval 503–603 (NDGLNIRAPQ…VKDKAKPVDP (101 aa)) is lytM.

It is found in the periplasm. Required for efficient cell division, cell polarity and normal cell morphology. Facilitates remodeling of the peptidoglycan layer and, thus, coordinated constriction of the cell envelope during the division process. Plays a critical role in maintaining proper cell envelope architecture during growth and division. Required for normal envelope invagination during cell division and to establish or maintain outer membrane connections throughout the cell envelope. May serve as a regulatory hub coordinating the activities of multiple peptidoglycan-degrading enzymes during cell constriction. Required to position SdpA and SdpB at midcell. The sequence is that of Cell division protein DipM from Caulobacter vibrioides (strain NA1000 / CB15N) (Caulobacter crescentus).